Reading from the N-terminus, the 339-residue chain is Methylthioribose-1-phosphate isomerase (339 aa).

Substrate is bound by residues 52-54 (RGA), Arg89, and Gln188. Residue Asp229 is the Proton donor of the active site. 239 to 240 (NK) serves as a coordination point for substrate.

This sequence belongs to the eIF-2B alpha/beta/delta subunits family. MtnA subfamily.

The enzyme catalyses 5-(methylsulfanyl)-alpha-D-ribose 1-phosphate = 5-(methylsulfanyl)-D-ribulose 1-phosphate. It participates in amino-acid biosynthesis; L-methionine biosynthesis via salvage pathway; L-methionine from S-methyl-5-thio-alpha-D-ribose 1-phosphate: step 1/6. Catalyzes the interconversion of methylthioribose-1-phosphate (MTR-1-P) into methylthioribulose-1-phosphate (MTRu-1-P). The chain is Methylthioribose-1-phosphate isomerase from Anaeromyxobacter sp. (strain K).